The primary structure comprises 567 residues: NADH-ubiquinone oxidoreductase chain 2 (567 aa).

14 helical membrane-spanning segments follow: residues 2–22 (LILS…IDTI), 43–63 (IGII…LSYI), 85–105 (NIFN…LLSI), 133–153 (LNIY…LLLT), 158–178 (ISIF…TGII), 189–209 (LFYY…ISLL), 236–256 (ILIG…AAPM), 274–294 (YISL…ILNL), 312–332 (LIYI…IGGL), 340–360 (ILAY…LSLI), 372–392 (IIYI…LIIA), 423–443 (LIFC…LFGF), 459–479 (LFLS…YLYF), and 530–550 (VGNY…FNFI).

Belongs to the complex I subunit 2 family.

The protein localises to the mitochondrion inner membrane. The enzyme catalyses a ubiquinone + NADH + 5 H(+)(in) = a ubiquinol + NAD(+) + 4 H(+)(out). Core subunit of the mitochondrial membrane respiratory chain NADH dehydrogenase (Complex I) that is believed to belong to the minimal assembly required for catalysis. Complex I functions in the transfer of electrons from NADH to the respiratory chain. The immediate electron acceptor for the enzyme is believed to be ubiquinone. The polypeptide is NADH-ubiquinone oxidoreductase chain 2 (ND2) (Wickerhamomyces canadensis (Yeast)).